The following is a 306-amino-acid chain: uncharacterized protein (306 aa).

Tyr-51 functions as the Proton donor in the catalytic mechanism. Position 197–207 (197–207 (GPVAKGLLTEK)) interacts with NADP(+).

The protein belongs to the aldo/keto reductase family. Aldo/keto reductase 2 subfamily.

This is an uncharacterized protein from Bacillus subtilis (strain 168).